The chain runs to 495 residues: Pleckstrin homology domain-containing family O member 2 (495 aa).

A PH domain is found at 18-120; sequence TADKAGWIKK…WIKALNEGIN (103 aa). Residues S165 and S168 each carry the phosphoserine modification. The disordered stretch occupies residues 171–411; sequence LSRLDLDVPD…ESPQHPRLPK (241 aa). The span at 198-213 shows a compositional bias: pro residues; that stretch reads QEPPRALMPPVKPSPG. T233 is subject to Phosphothreonine. Polar residues predominate over residues 235 to 244; that stretch reads DSASSGANPE. Residues S236, S238, S239, S274, and S292 each carry the phosphoserine modification. The residue at position 296 (T296) is a Phosphothreonine. Positions 324–335 are enriched in low complexity; that stretch reads SGVDASGSSQSS. The segment covering 336–350 has biased composition (polar residues); that stretch reads EAPETTSPEPTQVSV. S395 is modified (phosphoserine). A compositionally biased stretch (basic and acidic residues) spans 399-411; that stretch reads LLRESPQHPRLPK. Positions 444 to 469 form a coiled coil; that stretch reads CAESLLSQAVEQLRQATQVLQEMRDL.

This Mus musculus (Mouse) protein is Pleckstrin homology domain-containing family O member 2 (Plekho2).